The primary structure comprises 439 residues: Tol-Pal system protein TolB (439 aa).

A signal peptide spans 1 to 22; the sequence is MKKPLRWLAALTALLLPLSALA.

It belongs to the TolB family. The Tol-Pal system is composed of five core proteins: the inner membrane proteins TolA, TolQ and TolR, the periplasmic protein TolB and the outer membrane protein Pal. They form a network linking the inner and outer membranes and the peptidoglycan layer.

Its subcellular location is the periplasm. Functionally, part of the Tol-Pal system, which plays a role in outer membrane invagination during cell division and is important for maintaining outer membrane integrity. The sequence is that of Tol-Pal system protein TolB from Xanthomonas axonopodis pv. citri (strain 306).